A 188-amino-acid polypeptide reads, in one-letter code: Acireductone dioxygenase (188 aa).

Residues His97, His99, Glu103, and His141 each contribute to the Fe(2+) site. Ni(2+) contacts are provided by His97, His99, Glu103, and His141.

It belongs to the acireductone dioxygenase (ARD) family. Monomer. It depends on Fe(2+) as a cofactor. Ni(2+) serves as cofactor.

It carries out the reaction 1,2-dihydroxy-5-(methylsulfanyl)pent-1-en-3-one + O2 = 3-(methylsulfanyl)propanoate + CO + formate + 2 H(+). The enzyme catalyses 1,2-dihydroxy-5-(methylsulfanyl)pent-1-en-3-one + O2 = 4-methylsulfanyl-2-oxobutanoate + formate + 2 H(+). Its pathway is amino-acid biosynthesis; L-methionine biosynthesis via salvage pathway; L-methionine from S-methyl-5-thio-alpha-D-ribose 1-phosphate: step 5/6. In terms of biological role, catalyzes 2 different reactions between oxygen and the acireductone 1,2-dihydroxy-3-keto-5-methylthiopentene (DHK-MTPene) depending upon the metal bound in the active site. Fe-containing acireductone dioxygenase (Fe-ARD) produces formate and 2-keto-4-methylthiobutyrate (KMTB), the alpha-ketoacid precursor of methionine in the methionine recycle pathway. Ni-containing acireductone dioxygenase (Ni-ARD) produces methylthiopropionate, carbon monoxide and formate, and does not lie on the methionine recycle pathway. In Xanthomonas axonopodis pv. citri (strain 306), this protein is Acireductone dioxygenase.